We begin with the raw amino-acid sequence, 88 residues long: MASQVVLSFALVVVLAVFVGQVDSCPSDCKCDYRSSQCRPANDDVHPNVCIDHYCVVMNLAKREQRPELSPGALDDSSEEKDNEASLA.

The first 24 residues, 1-24 (MASQVVLSFALVVVLAVFVGQVDS), serve as a signal peptide directing secretion. The segment at 66-88 (RPELSPGALDDSSEEKDNEASLA) is disordered. A propeptide spanning residues 79 to 88 (EEKDNEASLA) is cleaved from the precursor.

The protein belongs to the scoloptoxin-XY family. In terms of processing, contains 3 disulfide bonds. Expressed by the venom gland.

The protein localises to the secreted. The protein is U-scoloptoxin(XY)-Er1b of Ethmostigmus rubripes (Giant centipede).